We begin with the raw amino-acid sequence, 197 residues long: Crossover junction endodeoxyribonuclease RuvC (197 aa).

Active-site residues include aspartate 7, glutamate 68, and aspartate 141. Mg(2+)-binding residues include aspartate 7, glutamate 68, and aspartate 141. Composition is skewed to low complexity over residues 165-181 (AAPA…TPAR) and 188-197 (APARRPAGAS). Residues 165 to 197 (AAPAAPVSRPAPATPARRSPRPAAPARRPAGAS) form a disordered region.

This sequence belongs to the RuvC family. In terms of assembly, homodimer which binds Holliday junction (HJ) DNA. The HJ becomes 2-fold symmetrical on binding to RuvC with unstacked arms; it has a different conformation from HJ DNA in complex with RuvA. In the full resolvosome a probable DNA-RuvA(4)-RuvB(12)-RuvC(2) complex forms which resolves the HJ. Requires Mg(2+) as cofactor.

It is found in the cytoplasm. It catalyses the reaction Endonucleolytic cleavage at a junction such as a reciprocal single-stranded crossover between two homologous DNA duplexes (Holliday junction).. Its function is as follows. The RuvA-RuvB-RuvC complex processes Holliday junction (HJ) DNA during genetic recombination and DNA repair. Endonuclease that resolves HJ intermediates. Cleaves cruciform DNA by making single-stranded nicks across the HJ at symmetrical positions within the homologous arms, yielding a 5'-phosphate and a 3'-hydroxyl group; requires a central core of homology in the junction. The consensus cleavage sequence is 5'-(A/T)TT(C/G)-3'. Cleavage occurs on the 3'-side of the TT dinucleotide at the point of strand exchange. HJ branch migration catalyzed by RuvA-RuvB allows RuvC to scan DNA until it finds its consensus sequence, where it cleaves and resolves the cruciform DNA. In Frankia alni (strain DSM 45986 / CECT 9034 / ACN14a), this protein is Crossover junction endodeoxyribonuclease RuvC.